The chain runs to 382 residues: Sphingoid long-chain base transporter RSB1 (382 aa).

Residues 1 to 34 are Extracellular-facing; sequence MSNATNNTLGSLLPQLEAAANSNSLYGGMVPNLR. N-linked (GlcNAc...) asparagine glycosylation is found at N3 and N6. The chain crosses the membrane as a helical span at residues 35-55; it reads FNITMIVIWGILLTIHVVQLL. Topologically, residues 56–57 are cytoplasmic; the sequence is MR. A helical membrane pass occupies residues 58 to 78; the sequence is QYWFSIAFICTGILEVLGFIG. At 79–90 the chain is on the extracellular side; it reads RTWSHSNVADMD. A helical membrane pass occupies residues 91–111; it reads AFLLNMICLTIAPVFTMGGIY. Residues 112–135 lie on the Cytoplasmic side of the membrane; that stretch reads YQLAKLIEVYGHRFSLLPSPMAYS. A helical membrane pass occupies residues 136–156; it reads FIFICSDIVSLVVQAVGGGLC. Residues 157–171 are Extracellular-facing; the sequence is GVAVTDGTSTTTGNH. A helical transmembrane segment spans residues 172–192; sequence VFIAGLAIQVASMAIFLMLWF. The Cytoplasmic portion of the chain corresponds to 193-241; sequence HFLFRIYISVRWEHINSRPISLSLLKISQTEVDYLYREKFHFLRLEPKR. A helical membrane pass occupies residues 242–262; that stretch reads WVFHYFNLAMTVAVLTIFTRC. Topologically, residues 263–281 are extracellular; sequence CYRLAELVVGWDGYLITHE. The chain crosses the membrane as a helical span at residues 282-302; sequence WYFIILDALMMAIATVTLTIF. Residues 303-382 lie on the Cytoplasmic side of the membrane; sequence HPGFAFKGRS…LFSSKKKAKL (80 aa).

This sequence belongs to the lipid-translocating exporter (LTE) (TC 9.A.26.1) family.

The protein localises to the cell membrane. In terms of biological role, catalyzes the ATP-dependent translocation of sphingoid long-chain bases (LCBs) from the cytoplasmic site toward the extracytoplasmic side of the membrane (flip-flop). Involved in the establishment of the functional lipid asymmetry of the plasma membrane. Regulates intracellular levels of LCBs, sphingolipid precursors that are growth inhibitory at increased levels. The polypeptide is Sphingoid long-chain base transporter RSB1 (RSB1) (Saccharomyces cerevisiae (strain AWRI1631) (Baker's yeast)).